Here is a 175-residue protein sequence, read N- to C-terminus: Ribosome-binding factor A (175 aa).

The interval 125 to 175 (TAKHAGEADPYKSDAPEDVDIDEDDFDEEDIDLAGDDDIDEDANKDADSSK) is disordered. Basic and acidic residues predominate over residues 128–139 (HAGEADPYKSDA). Residues 140–165 (PEDVDIDEDDFDEEDIDLAGDDDIDE) show a composition bias toward acidic residues. Over residues 166 to 175 (DANKDADSSK) the composition is skewed to basic and acidic residues.

The protein belongs to the RbfA family. Monomer. Binds 30S ribosomal subunits, but not 50S ribosomal subunits or 70S ribosomes.

It is found in the cytoplasm. Functionally, one of several proteins that assist in the late maturation steps of the functional core of the 30S ribosomal subunit. Associates with free 30S ribosomal subunits (but not with 30S subunits that are part of 70S ribosomes or polysomes). Required for efficient processing of 16S rRNA. May interact with the 5'-terminal helix region of 16S rRNA. The polypeptide is Ribosome-binding factor A (Pseudarthrobacter chlorophenolicus (strain ATCC 700700 / DSM 12829 / CIP 107037 / JCM 12360 / KCTC 9906 / NCIMB 13794 / A6) (Arthrobacter chlorophenolicus)).